The sequence spans 205 residues: Adenylyl-sulfate kinase (205 aa).

31-38 (GLSGAGKS) contributes to the ATP binding site. S105 (phosphoserine intermediate) is an active-site residue.

This sequence belongs to the APS kinase family.

It catalyses the reaction adenosine 5'-phosphosulfate + ATP = 3'-phosphoadenylyl sulfate + ADP + H(+). It functions in the pathway sulfur metabolism; hydrogen sulfide biosynthesis; sulfite from sulfate: step 2/3. Catalyzes the synthesis of activated sulfate. This Shewanella baltica (strain OS195) protein is Adenylyl-sulfate kinase.